The chain runs to 649 residues: Acetyl-coenzyme A synthetase (649 aa).

Residues 189–192 (RGGK), T311, and N335 each bind CoA. ATP is bound by residues 387 to 389 (GEP), 411 to 416 (DTWWQT), D500, and R515. S523 serves as a coordination point for CoA. R526 provides a ligand contact to ATP. Mg(2+)-binding residues include V537, H539, and V542. Residue R584 coordinates CoA. K609 carries the post-translational modification N6-acetyllysine.

Belongs to the ATP-dependent AMP-binding enzyme family. It depends on Mg(2+) as a cofactor. Post-translationally, acetylated. Deacetylation by the SIR2-homolog deacetylase activates the enzyme.

The enzyme catalyses acetate + ATP + CoA = acetyl-CoA + AMP + diphosphate. Catalyzes the conversion of acetate into acetyl-CoA (AcCoA), an essential intermediate at the junction of anabolic and catabolic pathways. AcsA undergoes a two-step reaction. In the first half reaction, AcsA combines acetate with ATP to form acetyl-adenylate (AcAMP) intermediate. In the second half reaction, it can then transfer the acetyl group from AcAMP to the sulfhydryl group of CoA, forming the product AcCoA. This chain is Acetyl-coenzyme A synthetase, found in Rhizobium meliloti (strain 1021) (Ensifer meliloti).